The sequence spans 275 residues: AA9 family lytic polysaccharide monooxygenase AA9-X282 (275 aa).

A signal peptide spans 1–17 (MFTKLIIAASLAASVAA). H18 provides a ligand contact to Cu(2+). T20 carries the phosphothreonine modification. Phosphoserine is present on residues S43 and S49. T50 is modified (phosphothreonine). S58 carries the post-translational modification Phosphoserine. A disulfide bridge links C66 with C185. H96 serves as a coordination point for Cu(2+). S130 carries the post-translational modification Phosphoserine. Residues H171 and Q180 each contribute to the O2 site. Position 182 (Y182) interacts with Cu(2+). The segment at 236-265 (TSPAVANTPYPTTATWNTALQPSTVPTAVP) is X282 extension. Residues 268–275 (GTPGIGKA) carry the 9res motif motif.

This sequence belongs to the polysaccharide monooxygenase AA9 family. It depends on Cu(2+) as a cofactor.

It localises to the secreted. It carries out the reaction [(1-&gt;4)-beta-D-glucosyl]n+m + reduced acceptor + O2 = 4-dehydro-beta-D-glucosyl-[(1-&gt;4)-beta-D-glucosyl]n-1 + [(1-&gt;4)-beta-D-glucosyl]m + acceptor + H2O.. Functionally, lytic polysaccharide monooxygenase (LPMO) that depolymerizes crystalline and amorphous polysaccharides via the oxidation of scissile alpha- or beta-(1-4)-glycosidic bonds, yielding C1 oxidation products. Catalysis by LPMOs requires the reduction of the active-site copper from Cu(II) to Cu(I) by a reducing agent and H(2)O(2) or O(2) as a cosubstrate. Shows only weak binding properties to cellulose, and low cellulolytic oxidative activity which questions the involvement of X282 extension-containing AA9 proteins in the degradation of plant cell wall and opens new avenues as to the divergence of function of some AA9 members. The chain is AA9 family lytic polysaccharide monooxygenase AA9-X282 from Trametes coccinea (strain BRFM310) (Pycnoporus coccineus).